The primary structure comprises 139 residues: Putative pre-16S rRNA nuclease (139 aa).

This sequence belongs to the YqgF nuclease family.

The protein resides in the cytoplasm. Its function is as follows. Could be a nuclease involved in processing of the 5'-end of pre-16S rRNA. In Streptococcus uberis (strain ATCC BAA-854 / 0140J), this protein is Putative pre-16S rRNA nuclease.